The sequence spans 180 residues: Probable chorismate pyruvate-lyase (180 aa).

3 residues coordinate substrate: Arg-82, Leu-120, and Glu-165.

This sequence belongs to the UbiC family.

Its subcellular location is the cytoplasm. It catalyses the reaction chorismate = 4-hydroxybenzoate + pyruvate. The protein operates within cofactor biosynthesis; ubiquinone biosynthesis. Removes the pyruvyl group from chorismate, with concomitant aromatization of the ring, to provide 4-hydroxybenzoate (4HB) for the ubiquinone pathway. This Aliivibrio fischeri (strain ATCC 700601 / ES114) (Vibrio fischeri) protein is Probable chorismate pyruvate-lyase.